The chain runs to 406 residues: MLFHSLSGPEVHGVIDEMDRRAKSEAPAISSAIDRGDTETTMPSISSDRAALCAGCGGKISDRYYLLAVDKQWHMRCLKCCECKLNLESELTCFSKDGSIYCKEDYYRRFSVQRCARCHLGISASEMVMRARDLVYHLNCFTCTTCNKMLTTGDHFGMKDSLVYCRLHFEALLQGEYPAHFNHADVAAAAAAAAAAKSAGLGSAGANPLGLPYYNGVGTVQKGRPRKRKSPGPGADLAAYNAALSCNENDAEHLDRDQPYPSSQKTKRMRTSFKHHQLRTMKSYFAINHNPDAKDLKQLAQKTGLTKRVLQVWFQNARAKFRRNLLRQENTGVDKTSDATLQTGTPSGPASELSNASLSPSSTPTTLTDLTSPTLPTVTSVLTSVPGNLEGHEPHSPSQTTLTNLF.

2 consecutive LIM zinc-binding domains span residues 53-105 (CAGC…CKED) and 115-168 (CARC…CRLH). The interval 250-270 (DAEHLDRDQPYPSSQKTKRMR) is disordered. The homeobox DNA-binding region spans 266-325 (TKRMRTSFKHHQLRTMKSYFAINHNPDAKDLKQLAQKTGLTKRVLQVWFQNARAKFRRNL). The Nuclear localization signal motif lies at 307–323 (KRVLQVWFQNARAKFRR). A compositionally biased stretch (polar residues) spans 328–356 (QENTGVDKTSDATLQTGTPSGPASELSNA). Disordered stretches follow at residues 328–375 (QENT…SPTL) and 387–406 (GNLE…TNLF). The segment covering 357-375 (SLSPSSTPTTLTDLTSPTL) has biased composition (low complexity). Residues 396–406 (SPSQTTLTNLF) show a composition bias toward polar residues.

As to quaternary structure, interacts (via LIM domains) with CITED2. Interacts with POU4F2 isoform 1.

The protein resides in the nucleus. Its function is as follows. Acts as a transcriptional activator. Stimulates the promoter of the alpha-glycoprotein gene. Transcriptional regulatory protein involved in the control of cell differentiation in developing lymphoid and neural cell types. This Mus musculus (Mouse) protein is LIM/homeobox protein Lhx2 (Lhx2).